Here is a 292-residue protein sequence, read N- to C-terminus: NAD kinase (292 aa).

The Proton acceptor role is filled by aspartate 73. NAD(+) contacts are provided by residues 73–74 (DG), 147–148 (NE), histidine 158, arginine 175, aspartate 177, 188–193 (TGYSLS), and glutamine 247.

Belongs to the NAD kinase family. A divalent metal cation is required as a cofactor.

It localises to the cytoplasm. It carries out the reaction NAD(+) + ATP = ADP + NADP(+) + H(+). Its function is as follows. Involved in the regulation of the intracellular balance of NAD and NADP, and is a key enzyme in the biosynthesis of NADP. Catalyzes specifically the phosphorylation on 2'-hydroxyl of the adenosine moiety of NAD to yield NADP. The polypeptide is NAD kinase (Buchnera aphidicola subsp. Acyrthosiphon pisum (strain 5A)).